The chain runs to 309 residues: MMSFLHIVFSILVVVAFILGNFANGFIALINFIAWVKRQKISSADQIIAALAVSRVGLLWVILLHWYSTVLNPTSSNLKVIIFISNAWAVTNHFSIWLATSLSIFYLLKIVNFSRLIFHHLKRKAKSVVLVIVLGSLFFLVCHLVMKHTYINVWTEECEGNVTWKIKLRNAMHLSNLTVAMLANLIPFTLTLISFLLLIYSLCKHLKKMQLHGKGSQDPSTKIHIKALQTVTSFLILLAIYFLCLIISFWNFKMRPKEIVLMLCQAFGIIYPSFHSFILIWGNKTLKQTFLSVLWQVTCWAKGQNQSTP.

The Extracellular segment spans residues 1–6 (MMSFLH). The chain crosses the membrane as a helical span at residues 7 to 27 (IVFSILVVVAFILGNFANGFI). The Cytoplasmic segment spans residues 28–46 (ALINFIAWVKRQKISSADQ). A helical transmembrane segment spans residues 47–67 (IIAALAVSRVGLLWVILLHWY). Residues 68–79 (STVLNPTSSNLK) are Extracellular-facing. The chain crosses the membrane as a helical span at residues 80-100 (VIIFISNAWAVTNHFSIWLAT). At 101–125 (SLSIFYLLKIVNFSRLIFHHLKRKA) the chain is on the cytoplasmic side. A helical transmembrane segment spans residues 126-146 (KSVVLVIVLGSLFFLVCHLVM). At 147-178 (KHTYINVWTEECEGNVTWKIKLRNAMHLSNLT) the chain is on the extracellular side. Asn-161 and Asn-176 each carry an N-linked (GlcNAc...) asparagine glycan. A helical transmembrane segment spans residues 179-199 (VAMLANLIPFTLTLISFLLLI). Residues 200–229 (YSLCKHLKKMQLHGKGSQDPSTKIHIKALQ) lie on the Cytoplasmic side of the membrane. A helical transmembrane segment spans residues 230 to 250 (TVTSFLILLAIYFLCLIISFW). At 251 to 259 (NFKMRPKEI) the chain is on the extracellular side. A helical membrane pass occupies residues 260-280 (VLMLCQAFGIIYPSFHSFILI). Residues 281–309 (WGNKTLKQTFLSVLWQVTCWAKGQNQSTP) are Cytoplasmic-facing.

The protein belongs to the G-protein coupled receptor T2R family. As to expression, expressed in subsets of taste receptor cells of the tongue and exclusively in gustducin-positive cells.

It is found in the membrane. In terms of biological role, receptor that may play a role in the perception of bitterness and is gustducin-linked. May play a role in sensing the chemical composition of the gastrointestinal content. The activity of this receptor may stimulate alpha gustducin, mediate PLC-beta-2 activation and lead to the gating of TRPM5. The polypeptide is Taste receptor type 2 member 20 (TAS2R20) (Homo sapiens (Human)).